A 253-amino-acid chain; its full sequence is 5'-nucleotidase SurE (253 aa).

Asp-8, Asp-9, Ser-39, and Asn-96 together coordinate a divalent metal cation.

The protein belongs to the SurE nucleotidase family. A divalent metal cation is required as a cofactor.

It is found in the cytoplasm. It carries out the reaction a ribonucleoside 5'-phosphate + H2O = a ribonucleoside + phosphate. Its function is as follows. Nucleotidase that shows phosphatase activity on nucleoside 5'-monophosphates. The chain is 5'-nucleotidase SurE from Rhodopirellula baltica (strain DSM 10527 / NCIMB 13988 / SH1).